We begin with the raw amino-acid sequence, 210 residues long: Large ribosomal subunit protein bL25 (210 aa).

This sequence belongs to the bacterial ribosomal protein bL25 family. CTC subfamily. In terms of assembly, part of the 50S ribosomal subunit; part of the 5S rRNA/L5/L18/L25 subcomplex. Contacts the 5S rRNA. Binds to the 5S rRNA independently of L5 and L18.

In terms of biological role, this is one of the proteins that binds to the 5S RNA in the ribosome where it forms part of the central protuberance. This chain is Large ribosomal subunit protein bL25, found in Herminiimonas arsenicoxydans.